The following is a 308-amino-acid chain: Probable plastid-lipid-associated protein 9, chloroplastic (308 aa).

A chloroplast-targeting transit peptide spans 1-55 (MALIQHGSVSGTSAVRLSFSSSVSPPSSSPPLSRVSLNFQSEKKSCYRRMICRAM).

The protein belongs to the PAP/fibrillin family.

It localises to the plastid. It is found in the chloroplast. Its subcellular location is the plastoglobule. This chain is Probable plastid-lipid-associated protein 9, chloroplastic (PAP9), found in Arabidopsis thaliana (Mouse-ear cress).